We begin with the raw amino-acid sequence, 80 residues long: Large ribosomal subunit protein bL31B (80 aa).

This sequence belongs to the bacterial ribosomal protein bL31 family. Type B subfamily. Part of the 50S ribosomal subunit.

This Oenococcus oeni (strain ATCC BAA-331 / PSU-1) protein is Large ribosomal subunit protein bL31B.